Consider the following 327-residue polypeptide: MENVFDYEDIQLIPAKCVVNSRSECDTSVTLGNRTFKLPVVPANMQTIIDEKIAKYLAEKNYFYIMHRFEPEKRIDFIQDMQEYNLFTSISVGVKEEEYTFIEDLAAKQLIPDYITIDIAHGHSDAVIKMIKHIKNNLPSSFVIAGNVGTPEAVRELENAGADATKVGIGPGKVCITKIKTGFGTGGWQLAALRWCAKAASKPIIADGGIRTHGDIAKSIRFGASMVMIGSLFAGHEESPGETIEQDGKKIKEYFGSASEFQKGEKKNVEGKKMYVEHKGPLQDTLTEMEQDLQSSISYAGGKQLDAIRNVDYVVVKNSIFNGDKVF.

The active-site Thioimidate intermediate is C175. Position 204–227 (204–227 (IIADGGIRTHGDIAKSIRFGASMV)) interacts with NADP(+).

The protein belongs to the IMPDH/GMPR family. GuaC type 2 subfamily.

It carries out the reaction IMP + NH4(+) + NADP(+) = GMP + NADPH + 2 H(+). Catalyzes the irreversible NADPH-dependent deamination of GMP to IMP. It functions in the conversion of nucleobase, nucleoside and nucleotide derivatives of G to A nucleotides, and in maintaining the intracellular balance of A and G nucleotides. The chain is GMP reductase from Oceanobacillus iheyensis (strain DSM 14371 / CIP 107618 / JCM 11309 / KCTC 3954 / HTE831).